Reading from the N-terminus, the 188-residue chain is Elongation factor P (188 aa).

Lysine 34 bears the N6-(3,6-diaminohexanoyl)-5-hydroxylysine mark.

It belongs to the elongation factor P family. Post-translationally, may be beta-lysylated on the epsilon-amino group of Lys-34 by the combined action of EpmA and EpmB, and then hydroxylated on the C5 position of the same residue by EpmC (if this protein is present). Lysylation is critical for the stimulatory effect of EF-P on peptide-bond formation. The lysylation moiety may extend toward the peptidyltransferase center and stabilize the terminal 3-CCA end of the tRNA. Hydroxylation of the C5 position on Lys-34 may allow additional potential stabilizing hydrogen-bond interactions with the P-tRNA.

Its subcellular location is the cytoplasm. It functions in the pathway protein biosynthesis; polypeptide chain elongation. In terms of biological role, involved in peptide bond synthesis. Alleviates ribosome stalling that occurs when 3 or more consecutive Pro residues or the sequence PPG is present in a protein, possibly by augmenting the peptidyl transferase activity of the ribosome. Modification of Lys-34 is required for alleviation. The sequence is that of Elongation factor P from Pseudoalteromonas translucida (strain TAC 125).